The following is a 276-amino-acid chain: MAVRELPGAWNFRDVADTATALRPGRLFRSSELSRLDDAGRATLRRLGITDVADLRSSREVARRGPGRVPDGIDVHLLPFPDLADDDADDSAPHETAFKRLLTNDGSNGESGESSQSINDAATRYMTDEYRQFPTRNGAQRALHRVVTLLAAGRPVLTHCFAGKDRTGFVVALVLEAVGLDRDVIVADYLRSNDSVPQLRARISEMIQQRFDTELAPEVVTFTKARLSDGVLGVRAEYLAAARQTIDETYGSLGGYLRDAGISQATVNRMRGVLLG.

C160 (phosphocysteine intermediate) is an active-site residue. Residues 232 to 250 (LGVRAEYLAAARQTIDETY) form a UIM-like region region.

This sequence belongs to the protein-tyrosine phosphatase family. As to quaternary structure, interacts (via UIM-like region) with host ubiquitin; activating the phosphatidylinositol phosphate phosphatase activity.

The protein resides in the secreted. Its subcellular location is the host cytoplasm. The protein localises to the host cell membrane. The catalysed reaction is O-phospho-L-tyrosyl-[protein] + H2O = L-tyrosyl-[protein] + phosphate. It catalyses the reaction O-phospho-L-seryl-[protein] + H2O = L-seryl-[protein] + phosphate. The enzyme catalyses O-phospho-L-threonyl-[protein] + H2O = L-threonyl-[protein] + phosphate. It carries out the reaction 1,2-dioctanoyl-sn-glycero-3-phospho-(1-D-myo-inositol-3-phosphate) + H2O = 1,2-dioctanoyl-sn-glycero-3-phospho-(1D-myo-inositol) + phosphate. The catalysed reaction is 1,2-dioctanoyl-sn-glycero-3-phospho-(1-D-myo-inositol-4-phosphate) + H2O = 1,2-dioctanoyl-sn-glycero-3-phospho-(1D-myo-inositol) + phosphate. It catalyses the reaction 1,2-dioctanoyl-sn-glycero-3-phospho-(1D-myo-inositol-5-phosphate) + H2O = 1,2-dioctanoyl-sn-glycero-3-phospho-(1D-myo-inositol) + phosphate. Its activity is regulated as follows. Binding to host ubiquitin is required to activate the phosphatidylinositol phosphate phosphatase activity. Phosphatase activity is inhibited by sodium orthovanadate, a specific inhibitor of tyrosine phosphatases, but not by okadaic acid, an inhibitor of serine/threonine phosphatases. Inhibition of the enzyme reduces mycobacterial survival in infected macrophages. Inhibitors also enhance killing efficacy by first-line antibiotics. Essential virulence factor that promotes mycobacterial survival within host macrophages. Acts as a phosphatase that possesses triple substrate specificity toward phosphotyrosine, phosphoserine/threonine and phosphoinositides. Supports mycobacteria survival during infection by modulating the normal host signaling pathways, attenuating the bactericidal immune responses and promoting the host cell survival. Inhibits host pyroptosis by disrupting the membrane localization of host gasdermin-D (GSDMD): acts by catalyzing dephosphorylation of phosphatidylinositol (4,5)-bisphosphate and phosphatidylinositol 4-phosphate, thereby inhibiting the membrane targeting of GSDMD and subsequent cytokine release and pyroptosis. Inhibits host inflammatory responses and apoptosis through impeding the NF-kappa-B and MAPK signal pathways and TP53/p53 expression in the macrophage. Blocks the IL6/IL-6 production by down-regulating ERK1/2, p38 and p65 activity. Prevents macrophage cell death by activating the Akt pathway and blocking caspase 3 activity. Reduces the expression of iNOS in activated macrophages and inhibits the generation of destroying reactive nitrogen intermediate NO. This chain is Triple specificity protein phosphatase PtpB, found in Mycobacterium tuberculosis (strain ATCC 25618 / H37Rv).